The sequence spans 322 residues: Protein lin-56 (322 aa).

Positions 264 to 322 (SSQKLQQNGFPEKVEQMDKYSNKLKDEASDKKYEKPGKKDYVEEEGYWAPITDSEDDEA) are disordered. The segment covering 275-304 (EKVEQMDKYSNKLKDEASDKKYEKPGKKDY) has biased composition (basic and acidic residues).

Widely expressed throughout embryonic development. Expressed in the six multipotent ventral ectodermal blast cells, P3.p-P8.p, which generate the vulva and in their descendants throughout vulval development.

The protein localises to the nucleus. In terms of biological role, required for translation, stability and/or localization of lin-15a. The chain is Protein lin-56 (lin-56) from Caenorhabditis elegans.